The sequence spans 150 residues: Cytochrome c oxidase subunit 5A, mitochondrial (150 aa).

The N-terminal 41 residues, 1-41, are a transit peptide targeting the mitochondrion; sequence MLGAALRRCAVAATTWAGPRGHLHSARTPGPAAAIQSVRCY. The short motif at 2-17 is the SIFI-degron element; the sequence is LGAALRRCAVAATTWA. Residues K87 and K113 each carry the N6-acetyllysine modification. T141 carries the phosphothreonine modification.

Belongs to the cytochrome c oxidase subunit 5A family. Component of the cytochrome c oxidase (complex IV, CIV), a multisubunit enzyme composed of 14 subunits. The complex is composed of a catalytic core of 3 subunits MT-CO1, MT-CO2 and MT-CO3, encoded in the mitochondrial DNA, and 11 supernumerary subunits COX4I, COX5A, COX5B, COX6A, COX6B, COX6C, COX7A, COX7B, COX7C, COX8 and NDUFA4, which are encoded in the nuclear genome. The complex exists as a monomer or a dimer and forms supercomplexes (SCs) in the inner mitochondrial membrane with NADH-ubiquinone oxidoreductase (complex I, CI) and ubiquinol-cytochrome c oxidoreductase (cytochrome b-c1 complex, complex III, CIII), resulting in different assemblies (supercomplex SCI(1)III(2)IV(1) and megacomplex MCI(2)III(2)IV(2)). Interacts with AFG1L. Interacts with RAB5IF. In response to mitochondrial stress, the precursor protein is ubiquitinated by the SIFI complex in the cytoplasm before mitochondrial import, leading to its degradation. Within the SIFI complex, UBR4 initiates ubiquitin chain that are further elongated or branched by KCMF1.

Its subcellular location is the mitochondrion inner membrane. It participates in energy metabolism; oxidative phosphorylation. Functionally, component of the cytochrome c oxidase, the last enzyme in the mitochondrial electron transport chain which drives oxidative phosphorylation. The respiratory chain contains 3 multisubunit complexes succinate dehydrogenase (complex II, CII), ubiquinol-cytochrome c oxidoreductase (cytochrome b-c1 complex, complex III, CIII) and cytochrome c oxidase (complex IV, CIV), that cooperate to transfer electrons derived from NADH and succinate to molecular oxygen, creating an electrochemical gradient over the inner membrane that drives transmembrane transport and the ATP synthase. Cytochrome c oxidase is the component of the respiratory chain that catalyzes the reduction of oxygen to water. Electrons originating from reduced cytochrome c in the intermembrane space (IMS) are transferred via the dinuclear copper A center (CU(A)) of subunit 2 and heme A of subunit 1 to the active site in subunit 1, a binuclear center (BNC) formed by heme A3 and copper B (CU(B)). The BNC reduces molecular oxygen to 2 water molecules using 4 electrons from cytochrome c in the IMS and 4 protons from the mitochondrial matrix. The protein is Cytochrome c oxidase subunit 5A, mitochondrial (COX5A) of Symphalangus syndactylus (Siamang).